A 255-amino-acid chain; its full sequence is Hemin import ATP-binding protein HmuV (255 aa).

Residues 2–238 (LRVENLHVRR…EPLKAVFGLE (237 aa)) form the ABC transporter domain. 34 to 41 (GPNGAGKS) lines the ATP pocket.

It belongs to the ABC transporter superfamily. Heme (hemin) importer (TC 3.A.1.14.5) family. In terms of assembly, the complex is composed of two ATP-binding proteins (HmuV), two transmembrane proteins (HmuU) and a solute-binding protein (HmuT).

It is found in the cell inner membrane. Its function is as follows. Part of the ABC transporter complex HmuTUV involved in hemin import. Responsible for energy coupling to the transport system. This chain is Hemin import ATP-binding protein HmuV, found in Pseudomonas fluorescens (strain ATCC BAA-477 / NRRL B-23932 / Pf-5).